A 374-amino-acid chain; its full sequence is GDSL esterase/lipase At3g50400 (374 aa).

Residues 1–26 form the signal peptide; sequence MKKSIFFVPVLVLFFFGSRFSRVASA. Ser-41 (nucleophile) is an active-site residue. N-linked (GlcNAc...) asparagine glycans are attached at residues Asn-104 and Asn-125. Active-site residues include Asp-339 and His-342.

It belongs to the 'GDSL' lipolytic enzyme family.

The protein resides in the secreted. This Arabidopsis thaliana (Mouse-ear cress) protein is GDSL esterase/lipase At3g50400.